We begin with the raw amino-acid sequence, 255 residues long: Major prion protein (255 aa).

The signal sequence occupies residues 1–24 (MVKSHIGSWILVLFVAMWSDVGLC). The tract at residues 25–41 (KKRPKPGGGWNTGGSRY) is interaction with ADGRG6. Residues 25–232 (KKRPKPGGGW…ESEAYYQRGA (208 aa)) are interaction with GRB2, ERI3 and SYN1. A disordered region spans residues 28–110 (PKPGGGWNTG…QWNKPSKPKT (83 aa)). A run of 5 repeats spans residues 54-62 (PQGGGGWGQ), 63-70 (PHGGGWGQ), 71-78 (PHGGGWGQ), 79-86 (PHGGGWGQ), and 87-94 (PHGGGGWG). The interval 54–94 (PQGGGGWGQPHGGGWGQPHGGGWGQPHGGGWGQPHGGGGWG) is 5 X 8 AA tandem repeats of P-H-G-G-G-W-G-Q. Gly residues predominate over residues 55-97 (QGGGGWGQPHGGGWGQPHGGGWGQPHGGGWGQPHGGGGWGQGG). Positions 64, 65, 66, 72, 73, 74, 80, 81, 82, 88, 90, and 91 each coordinate Cu(2+). N174, N184, and N199 each carry an N-linked (GlcNAc...) asparagine glycan. Residues C182 and C216 are joined by a disulfide bond. A232 carries GPI-anchor amidated alanine lipidation. Residues 233–255 (SVILFSSPPVILLVSFLIFLIVG) constitute a propeptide, removed in mature form.

The protein belongs to the prion family. In terms of assembly, monomer and homodimer. Has a tendency to aggregate into amyloid fibrils containing a cross-beta spine, formed by a steric zipper of superposed beta-strands. Soluble oligomers may represent an intermediate stage on the path to fibril formation. Copper binding may promote oligomerization. Interacts with GRB2, APP, ERI3/PRNPIP and SYN1. Mislocalized cytosolically exposed PrP interacts with MGRN1; this interaction alters MGRN1 subcellular location and causes lysosomal enlargement. Interacts with APP. Interacts with KIAA1191. Interacts with ADGRG6.

It localises to the cell membrane. The protein localises to the golgi apparatus. Its primary physiological function is unclear. May play a role in neuronal development and synaptic plasticity. May be required for neuronal myelin sheath maintenance. May promote myelin homeostasis through acting as an agonist for ADGRG6 receptor. May play a role in iron uptake and iron homeostasis. Soluble oligomers are toxic to cultured neuroblastoma cells and induce apoptosis (in vitro). Association with GPC1 (via its heparan sulfate chains) targets PRNP to lipid rafts. Also provides Cu(2+) or Zn(2+) for the ascorbate-mediated GPC1 deaminase degradation of its heparan sulfate side chains. The polypeptide is Major prion protein (PRNP) (Canis lupus familiaris (Dog)).